The sequence spans 350 residues: tRNA N6-adenosine threonylcarbamoyltransferase (350 aa).

Fe cation-binding residues include His-109 and His-113. Residues 136–140 (TVSGG), Asp-169, Gly-182, Asp-186, and Asn-284 each bind substrate. Asp-312 serves as a coordination point for Fe cation.

Belongs to the KAE1 / TsaD family. Fe(2+) serves as cofactor.

It localises to the cytoplasm. The enzyme catalyses L-threonylcarbamoyladenylate + adenosine(37) in tRNA = N(6)-L-threonylcarbamoyladenosine(37) in tRNA + AMP + H(+). Required for the formation of a threonylcarbamoyl group on adenosine at position 37 (t(6)A37) in tRNAs that read codons beginning with adenine. Is involved in the transfer of the threonylcarbamoyl moiety of threonylcarbamoyl-AMP (TC-AMP) to the N6 group of A37, together with TsaE and TsaB. TsaD likely plays a direct catalytic role in this reaction. The protein is tRNA N6-adenosine threonylcarbamoyltransferase of Chlorobium chlorochromatii (strain CaD3).